The sequence spans 314 residues: Polyamine aminopropyltransferase (314 aa).

Residues 13–249 (WSWFLEWLTP…SMWGFVVASD (237 aa)) enclose the PABS domain. S-methyl-5'-thioadenosine is bound at residue Gln-42. Spermidine contacts are provided by His-73 and Glu-97. S-methyl-5'-thioadenosine-binding positions include Asp-117 and 149-150 (DA). Asp-168 (proton acceptor) is an active-site residue. Pro-177 is a binding site for S-methyl-5'-thioadenosine.

It belongs to the spermidine/spermine synthase family. As to quaternary structure, homodimer or homotetramer.

The protein resides in the cytoplasm. It carries out the reaction S-adenosyl 3-(methylsulfanyl)propylamine + putrescine = S-methyl-5'-thioadenosine + spermidine + H(+). It functions in the pathway amine and polyamine biosynthesis; spermidine biosynthesis; spermidine from putrescine: step 1/1. Functionally, catalyzes the irreversible transfer of a propylamine group from the amino donor S-adenosylmethioninamine (decarboxy-AdoMet) to putrescine (1,4-diaminobutane) to yield spermidine. In Aeropyrum pernix (strain ATCC 700893 / DSM 11879 / JCM 9820 / NBRC 100138 / K1), this protein is Polyamine aminopropyltransferase.